A 498-amino-acid polypeptide reads, in one-letter code: Lysine--tRNA ligase (498 aa).

Mg(2+)-binding residues include glutamate 411 and glutamate 418.

Belongs to the class-II aminoacyl-tRNA synthetase family. As to quaternary structure, homodimer. It depends on Mg(2+) as a cofactor.

The protein localises to the cytoplasm. It carries out the reaction tRNA(Lys) + L-lysine + ATP = L-lysyl-tRNA(Lys) + AMP + diphosphate. The sequence is that of Lysine--tRNA ligase from Enterococcus faecalis (strain ATCC 700802 / V583).